The chain runs to 102 residues: Monothiol glutaredoxin-S9 (102 aa).

One can recognise a Glutaredoxin domain in the interval 1–101; sequence MDKVVRMSSE…PLVKPFQANL (101 aa). C21 provides a ligand contact to [2Fe-2S] cluster.

The protein belongs to the glutaredoxin family. CC-type subfamily.

Its subcellular location is the cytoplasm. In terms of biological role, may only reduce GSH-thiol disulfides, but not protein disulfides. This is Monothiol glutaredoxin-S9 (GRXS9) from Arabidopsis thaliana (Mouse-ear cress).